Here is a 415-residue protein sequence, read N- to C-terminus: Low affinity tryptophan permease (415 aa).

At 1–11 the chain is on the cytoplasmic side; that stretch reads MTDQAEKKHSA. A helical transmembrane segment spans residues 12–32; it reads FWGVMVIAGTVIGGGMFALPV. Position 33 (D33) is a topological domain, periplasmic. The chain crosses the membrane as a helical span at residues 34–54; that stretch reads LAGAWFFWGAFILIIAWFSML. Over 55–86 the chain is Cytoplasmic; the sequence is HSGLLLLEANLNYPVGSSFNTITKDLIGNTWN. Residues 87–107 traverse the membrane as a helical segment; the sequence is IISGITVAFVLYILTYAYISA. Over 108 to 127 the chain is Periplasmic; sequence NGAIISETISMNLGYHANPR. Residues 128 to 148 traverse the membrane as a helical segment; sequence IVGICTAIFVASVLWLSSLAA. Residues 149–153 are Cytoplasmic-facing; it reads SRITS. A helical transmembrane segment spans residues 154–174; it reads LFLGLKIISFVIVFGSFFFQV. Residues 175–191 lie on the Periplasmic side of the membrane; that stretch reads DYSILRDATSSTAGTSY. The helical transmembrane segment at 192–212 threads the bilayer; the sequence is FPYIFMALPVCLASFGFHGNI. The Cytoplasmic portion of the chain corresponds to 213–229; sequence PSLIICYGKRKDKLIKS. A helical membrane pass occupies residues 230–250; it reads VVFGSLLALVIYLFWLYCTMG. The Periplasmic portion of the chain corresponds to 251–286; sequence NIPRESFKAIISSGGNVDSLVKSFLGTKQHGIIEFC. The helical transmembrane segment at 287 to 307 threads the bilayer; the sequence is LLVFSNLAVASSFFGVTLGLF. Residues 308–326 are Cytoplasmic-facing; it reads DYLADLFKIDNSHGGRFKT. Residues 327–347 form a helical membrane-spanning segment; it reads VLLTFLPPALLYLIFPNGFIY. Position 348 (G348) is a topological domain, periplasmic. The chain crosses the membrane as a helical span at residues 349–369; the sequence is IGGAGLCATIWAVIIPAVLAI. The Cytoplasmic segment spans residues 370–387; that stretch reads KARKKFPNQMFTVWGGNL. The chain crosses the membrane as a helical span at residues 388 to 408; it reads IPAIVILFGITVILCWFGNVF. At 409-415 the chain is on the periplasmic side; it reads NVLPKFG.

The protein belongs to the amino acid/polyamine transporter 2 family. Mtr/TnaB/TyrP permease subfamily.

The protein localises to the cell inner membrane. Its function is as follows. Involved in tryptophan transport across the cytoplasmic membrane. Plays a role in transporting tryptophan which is to be used catabolically. This chain is Low affinity tryptophan permease (tnaB), found in Escherichia coli (strain K12).